The following is a 105-amino-acid chain: Meiotically up-regulated gene 52 protein (105 aa).

Has a role in meiosis. This chain is Meiotically up-regulated gene 52 protein (mug52), found in Schizosaccharomyces pombe (strain 972 / ATCC 24843) (Fission yeast).